Consider the following 348-residue polypeptide: Ethanol acetyltransferase 2 (348 aa).

The N-terminal 19 residues, 1-19 (MIFNSLSIKRLSSTXTSLP), are a transit peptide targeting the mitochondrion. The 257-residue stretch at 49 to 305 (IIFLHGIYGY…VMKERPQEYI (257 aa)) folds into the AB hydrolase-1 domain. Residues Ser121, Asp145, and His294 each act as charge relay system in the active site.

This sequence belongs to the AB hydrolase superfamily.

It localises to the mitochondrion. The catalysed reaction is ethanol + acetyl-CoA = ethyl acetate + CoA. It catalyses the reaction acetyl-CoA + H2O = acetate + CoA + H(+). The enzyme catalyses ethyl acetate + H2O = ethanol + acetate + H(+). Its function is as follows. Alcohol acetyltransferase that catalyzes the synthesis of ethyl acetate from ethanol and acetyl-CoA. Can also function as a thioesterase by hydrolyzing acetyl-CoA in the absence of ethanol, as well as esterase hydrolyzing ethyl acetate. In Hanseniaspora uvarum (Yeast), this protein is Ethanol acetyltransferase 2 (EAT2).